We begin with the raw amino-acid sequence, 379 residues long: MPQISFEVVAECPHTRARAGVLHTAHGDIETPVFMPVGTQATVKGLTQRDLAEDLGVKILLSNTYHLYLRPGHELIRQMGGLHKFMSWPNAILTDSGGFQVFSLSGLRKIHEHGVVFQSHLNGDTHKFTPESTVDVQLAYGSDILMVLDECPEYPVSHEYARESMQRTVRWAREANEHFLERMKQMPTRHALFPIVQGSMFTDLRRECATALVDLDTDGYAIGGLSVGEPRPLSLEVVEATEAILPRTKPRYAMGVGMPAELPEYVARGIDMMDCVLPSRNARNGYLFTSEGRVIIKHARYKDDEGPLDPRCACYTCKSYSRAYLRHLFQSGEILFSVLATRHNIQRYLDIMREIRHAIISGSFPDYLRCVQSSLHDAG.

Asp95 (proton acceptor) is an active-site residue. Residues 95–99, Asp149, Gln197, and Gly224 contribute to the substrate site; that span reads DSGGF. An RNA binding region spans residues 255–261; that stretch reads GVGMPAE. The Nucleophile role is filled by Asp274. Positions 312, 314, 317, and 343 each coordinate Zn(2+).

It belongs to the queuine tRNA-ribosyltransferase family. Homodimer. Within each dimer, one monomer is responsible for RNA recognition and catalysis, while the other monomer binds to the replacement base PreQ1. Zn(2+) is required as a cofactor.

It catalyses the reaction 7-aminomethyl-7-carbaguanine + guanosine(34) in tRNA = 7-aminomethyl-7-carbaguanosine(34) in tRNA + guanine. Its pathway is tRNA modification; tRNA-queuosine biosynthesis. In terms of biological role, catalyzes the base-exchange of a guanine (G) residue with the queuine precursor 7-aminomethyl-7-deazaguanine (PreQ1) at position 34 (anticodon wobble position) in tRNAs with GU(N) anticodons (tRNA-Asp, -Asn, -His and -Tyr). Catalysis occurs through a double-displacement mechanism. The nucleophile active site attacks the C1' of nucleotide 34 to detach the guanine base from the RNA, forming a covalent enzyme-RNA intermediate. The proton acceptor active site deprotonates the incoming PreQ1, allowing a nucleophilic attack on the C1' of the ribose to form the product. After dissociation, two additional enzymatic reactions on the tRNA convert PreQ1 to queuine (Q), resulting in the hypermodified nucleoside queuosine (7-(((4,5-cis-dihydroxy-2-cyclopenten-1-yl)amino)methyl)-7-deazaguanosine). The protein is Queuine tRNA-ribosyltransferase of Solibacter usitatus (strain Ellin6076).